Consider the following 871-residue polypeptide: Pentatricopeptide repeat-containing protein At3g06920 (871 aa).

PPR repeat units lie at residues 97 to 131, 132 to 166, 167 to 201, 202 to 236, 237 to 271, 272 to 306, 307 to 341, 342 to 372, 376 to 410, 411 to 445, 446 to 480, 481 to 515, 516 to 550, 551 to 585, 586 to 620, 621 to 655, 656 to 690, 691 to 725, 726 to 760, 761 to 795, and 796 to 830; these read CPES…GFGP, SVNT…KFRP, AFSA…GYEP, TVHL…SLDA, DIVL…GLKP, DEVT…RRVP, CTYA…GSIP, SVIA…MKKD, NLST…GLFP, NVRT…VCTP, DEIT…DCRT, NSIV…NCSP, DLQL…RFVP, DARS…GCVL, DTRA…GFEP, TVVT…RIEL, NVVI…GLTP, NLYT…KCTP, NQVT…GMKP, STIS…GGVP, and DSAC…GLPI.

It belongs to the PPR family. P subfamily.

This Arabidopsis thaliana (Mouse-ear cress) protein is Pentatricopeptide repeat-containing protein At3g06920.